The following is a 52-amino-acid chain: Conotoxin Cal6.25 (52 aa).

Positions 1-22 (MKLTHVLIVAVLVLTVCHLTMA) are cleaved as a signal peptide. Disulfide bonds link Cys-24/Cys-41, Cys-31/Cys-45, and Cys-40/Cys-50.

In terms of tissue distribution, expressed by the venom duct.

The protein localises to the secreted. Its function is as follows. Probable neurotoxin. The protein is Conotoxin Cal6.25 of Californiconus californicus (California cone).